A 340-amino-acid polypeptide reads, in one-letter code: tRNA N6-adenosine threonylcarbamoyltransferase (340 aa).

Fe cation contacts are provided by H113 and H117. Residues 135–139 (LVSGG), D169, G182, D186, and N274 each bind substrate. Position 302 (D302) interacts with Fe cation.

The protein belongs to the KAE1 / TsaD family. The cofactor is Fe(2+).

It localises to the cytoplasm. The enzyme catalyses L-threonylcarbamoyladenylate + adenosine(37) in tRNA = N(6)-L-threonylcarbamoyladenosine(37) in tRNA + AMP + H(+). Functionally, required for the formation of a threonylcarbamoyl group on adenosine at position 37 (t(6)A37) in tRNAs that read codons beginning with adenine. Is involved in the transfer of the threonylcarbamoyl moiety of threonylcarbamoyl-AMP (TC-AMP) to the N6 group of A37, together with TsaE and TsaB. TsaD likely plays a direct catalytic role in this reaction. The sequence is that of tRNA N6-adenosine threonylcarbamoyltransferase from Mycolicibacterium vanbaalenii (strain DSM 7251 / JCM 13017 / BCRC 16820 / KCTC 9966 / NRRL B-24157 / PYR-1) (Mycobacterium vanbaalenii).